The chain runs to 279 residues: NADPH-dependent 7-cyano-7-deazaguanine reductase (279 aa).

Ile86–Ser88 is a binding site for substrate. Residue Ser88–Lys89 participates in NADPH binding. Cys187 functions as the Thioimide intermediate in the catalytic mechanism. The active-site Proton donor is the Asp194. His226–Glu227 contributes to the substrate binding site. Arg255–Gly256 lines the NADPH pocket.

Belongs to the GTP cyclohydrolase I family. QueF type 2 subfamily. As to quaternary structure, homodimer.

The protein localises to the cytoplasm. It catalyses the reaction 7-aminomethyl-7-carbaguanine + 2 NADP(+) = 7-cyano-7-deazaguanine + 2 NADPH + 3 H(+). It functions in the pathway tRNA modification; tRNA-queuosine biosynthesis. Its function is as follows. Catalyzes the NADPH-dependent reduction of 7-cyano-7-deazaguanine (preQ0) to 7-aminomethyl-7-deazaguanine (preQ1). The chain is NADPH-dependent 7-cyano-7-deazaguanine reductase from Actinobacillus pleuropneumoniae serotype 5b (strain L20).